The chain runs to 242 residues: Thaumatin-like protein 2 (242 aa).

The signal sequence occupies residues 1 to 23 (MMKTLGAVLSLSLTLLSFGGAHA). 8 disulfide bridges follow: cysteine 32–cysteine 241, cysteine 77–cysteine 87, cysteine 92–cysteine 99, cysteine 147–cysteine 230, cysteine 152–cysteine 213, cysteine 160–cysteine 176, cysteine 180–cysteine 189, and cysteine 190–cysteine 200.

This sequence belongs to the thaumatin family. As to expression, preferentially expressed in the abscission zone of fruit. Also expressed in leaf abscission zone.

The protein resides in the secreted. May be involved in protecting plant tissues from pathogen infection. The chain is Thaumatin-like protein 2 from Prunus persica (Peach).